The primary structure comprises 1190 residues: MPALWLRCGLCLALLLPAARASSGSQVCDCNGKSRQCIFDQELHKQTGNGFRCLNCNDNTDGIHCERCKAGFYRQRERDRCLPCNCNSKGSLSARCDNSGRCSCKPGVTGDRCDRCLPGFHTLTDAGCAQDQRLLDSKCDCDPAGISGPCDSGRCVCKPAVTGERCDRCRPGYYHLDGGNPQGCTQCFCYGHSASCHSSGDYSVHKIISAFHQDVDGWKAVQRNGSPAKLQWSQRHRDIFSSARRSDPVYFVAPAKFLGNQQVSYGQSLSFDYRVDRGGRHPSAHDVILEGAGLRITAPLMPLSKTLPCGITKTYTFRLNEHPSSNWSPQLSYFEYRRLLRNLTALRIRATYGEYSTGYIDNVTLISARPVSGAPAPWVEQCVCPVGYKGQFCQDCASGYKRDSARLGPFGTCIPCNCQGGGACDPDTGDCYSGDENPDIPECADCPIGFYNDPQDPRSCKPCPCRNGFSCSVMPETEEVVCNNCPQGVTGARCELCADGYFGDPFGERGPVRPCQPCQCNNNVDPSASGNCDRLTGRCLKCIHNTAGVHCDQCKAGYYGDPLAPNPADKCRACNCNPVGSEPVECRSDGSCVCKPGFGGLSCEHAALTSCPACYNQVKVQMDQFMQQLQILEALISKAQGGAVPNAELEGRMQQAEQALRDILREAQISQDAVRSFNLRVAKARTQENSYRDRLDDLKMTVERVRALGSQYQNQVQDTRRLITQMRLSLEESEASLQNTNIPPSEHYVGPNGFKSLAQEATRLADSHVQSASNMEQLAKETQEYSKELMSLVREALQEGGGSGSLDGAVVQRLVGKLQKTKSLAQELSREATQTDMEADRSYQHSLHLLNSVSQIQGVNDQSLQVEAKRLRQKADSLSNRVTKHMDEFKHVQSNLGNWEEETRQLLQNGKNGRQTSDQLLSRANLAKSRAQEALSMGNATFYEVENILKNLREFDLQVGDKRAEAEEAMKRLSYISQKVAGASDKTKQAEAALGSAAADAQRAKNAAREALEISGKIEQEIGGLNLEANVTADGALAMEKGLATLKSEMREVEGELSRKEQEFDMDMDAVQMVIAEAQRVENRAKNAGVTIQDTLNTLDGILHLIDQPGSVDEERLILLEQKLFRAKTQINSQLRPLMSELEERAHRQKGHLRFLETSIDGILADVKNLENIRDNLPPGCYNTQALEQQ.

The signal sequence occupies residues methionine 1–alanine 21. 12 disulfides stabilise this stretch: cysteine 28-cysteine 37, cysteine 30-cysteine 53, cysteine 56-cysteine 65, cysteine 68-cysteine 81, cysteine 84-cysteine 96, cysteine 86-cysteine 102, cysteine 104-cysteine 113, cysteine 116-cysteine 128, cysteine 139-cysteine 150, cysteine 141-cysteine 155, cysteine 157-cysteine 166, and cysteine 169-cysteine 184. Laminin EGF-like domains follow at residues cysteine 28–proline 83, cysteine 84–glutamine 130, and cysteine 139–glutamine 186. One can recognise a Laminin EGF-like 4; first part domain in the interval cysteine 187–cysteine 196. One can recognise a Laminin IV type A domain in the interval glutamine 213–glutamine 381. 2 N-linked (GlcNAc...) asparagine glycosylation sites follow: asparagine 342 and asparagine 362. Residues cysteine 382–proline 415 form the Laminin EGF-like 4; second part domain. 3 Laminin EGF-like domains span residues cysteine 416–proline 462, cysteine 463–proline 517, and cysteine 518–alanine 573. 11 cysteine pairs are disulfide-bonded: cysteine 463–cysteine 471, cysteine 465–cysteine 482, cysteine 485–cysteine 494, cysteine 497–cysteine 515, cysteine 518–cysteine 532, cysteine 520–cysteine 539, cysteine 542–cysteine 551, cysteine 554–cysteine 571, cysteine 574–cysteine 586, cysteine 576–cysteine 592, and cysteine 594–cysteine 603. Positions cysteine 574 to cysteine 603 constitute a Laminin EGF-like 8; truncated domain. The interval glutamate 604–glutamine 1190 is domain II and I. The stretch at alanine 613 to aspartate 718 forms a coiled coil. O-linked (Xyl...) (chondroitin sulfate) serine glycosylation occurs at serine 803. 2 coiled-coil regions span residues alanine 809–methionine 1073 and glutamate 1114–glutamine 1190. N-linked (GlcNAc...) asparagine glycosylation is found at asparagine 939 and asparagine 1030.

As to quaternary structure, laminin is a complex glycoprotein, consisting of three different polypeptide chains (alpha, beta, gamma), which are bound to each other by disulfide bonds into a cross-shaped molecule comprising one long and three short arms with globules at each end. Gamma-2 is a subunit of laminin-5 (laminin-332 or epiligrin/kalinin/nicein). O-glycosylated; contains chondroitin sulfate (CS).

The protein resides in the secreted. The protein localises to the extracellular space. Its subcellular location is the extracellular matrix. It localises to the basement membrane. Functionally, binding to cells via a high affinity receptor, laminin is thought to mediate the attachment, migration and organization of cells into tissues during embryonic development by interacting with other extracellular matrix components. Ladsin exerts cell-scattering activity toward a wide variety of cells, including epithelial, endothelial, and fibroblastic cells. This chain is Laminin subunit gamma-2 (LAMC2), found in Equus caballus (Horse).